Consider the following 780-residue polypeptide: MAARGGRSEPPQLAEYSCSYTVSRPVYSELAFQQQRERRLPERRTLRDSLARSCSCSRKRAFGVVKTLLPILDWLPKYRVKEWLLSDIISGVSTGLVGTLQGMAYALLAAVPVQFGLYSAFFPILTYFVFGTSRHISVGPFPVVSLMVGSVVLSMAPDDHFLVPSGNGSALNSTTLDTGTRDAARVLLASTLTLLVGIIQLVFGGLQIGFIVRYLADPLVGGFTTAAAFQVLVSQLKIVLNVSTKNYNGILSIIYTLIEIFQNIGDTNIADFIAGLLTIIVCMAVKELNDRFKHRIPVPIPIEVIVTIIATAISYGANLEKNYNAGIVKSIPSGFLPPVLPSVGLFSDMLAASFSIAVVAYAIAVSVGKVYATKHDYVIDGNQEFIAFGISNVFSGFFSCFVATTALSRTAVQESTGGKTQVAGLISAVIVMVAIVALGRLLEPLQKSVLAAVVIANLKGMFMQVCDVPRLWKQNKTDAVIWVFTCIMSIILGLDLGLLAGLLFALLTVVLRVQFPSWNGLGSVPSTDIYKSITHYKNLEEPEGVKILRFSSPIFYGNVDGFKKCINSTVGFDAIRVYNKRLKALRRIQKLIKKGQLRATKNGIISDIGSSNNAFEPDEDVEEPEELNIPTKEIEIQVDWNSELPVKVNVPKVPIHSLVLDCGAVSFLDVVGVRSLRMIVKEFQRIDVNVYFALLQDDVLEKMEQCGFFDDNIRKDRFFLTVHDAILHLQNQVKSREGQDSLLETVARIRDCKDPLDLMEAEMNAEELDVQDEAMRRLAS.

Residues 1–87 lie on the Cytoplasmic side of the membrane; it reads MAARGGRSEP…YRVKEWLLSD (87 aa). The helical transmembrane segment at 88–108 threads the bilayer; sequence IISGVSTGLVGTLQGMAYALL. A topological domain (extracellular) is located at residue Ala109. A helical membrane pass occupies residues 110–130; sequence AVPVQFGLYSAFFPILTYFVF. At 131–135 the chain is on the cytoplasmic side; sequence GTSRH. A helical transmembrane segment spans residues 136 to 156; that stretch reads ISVGPFPVVSLMVGSVVLSMA. Over 157–191 the chain is Extracellular; that stretch reads PDDHFLVPSGNGSALNSTTLDTGTRDAARVLLAST. A helical transmembrane segment spans residues 192-212; sequence LTLLVGIIQLVFGGLQIGFIV. The Cytoplasmic segment spans residues 213–218; that stretch reads RYLADP. A helical membrane pass occupies residues 219-239; it reads LVGGFTTAAAFQVLVSQLKIV. The Extracellular portion of the chain corresponds to 240–263; that stretch reads LNVSTKNYNGILSIIYTLIEIFQN. The helical transmembrane segment at 264–284 threads the bilayer; the sequence is IGDTNIADFIAGLLTIIVCMA. The Cytoplasmic portion of the chain corresponds to 285–295; sequence VKELNDRFKHR. Residues 296–316 traverse the membrane as a helical segment; sequence IPVPIPIEVIVTIIATAISYG. Over 317-344 the chain is Extracellular; sequence ANLEKNYNAGIVKSIPSGFLPPVLPSVG. Residues 345-365 form a helical membrane-spanning segment; it reads LFSDMLAASFSIAVVAYAIAV. Over 366–384 the chain is Cytoplasmic; the sequence is SVGKVYATKHDYVIDGNQE. The helical transmembrane segment at 385 to 405 threads the bilayer; that stretch reads FIAFGISNVFSGFFSCFVATT. Over 406–421 the chain is Extracellular; the sequence is ALSRTAVQESTGGKTQ. A helical membrane pass occupies residues 422-442; sequence VAGLISAVIVMVAIVALGRLL. The Cytoplasmic portion of the chain corresponds to 443–448; that stretch reads EPLQKS. Residues 449–469 form a helical membrane-spanning segment; it reads VLAAVVIANLKGMFMQVCDVP. The Extracellular portion of the chain corresponds to 470 to 486; the sequence is RLWKQNKTDAVIWVFTC. The helical transmembrane segment at 487–507 threads the bilayer; the sequence is IMSIILGLDLGLLAGLLFALL. Over 508 to 780 the chain is Cytoplasmic; it reads TVVLRVQFPS…QDEAMRRLAS (273 aa). One can recognise an STAS domain in the interval 535-729; the sequence is HYKNLEEPEG…LTVHDAILHL (195 aa).

Belongs to the SLC26A/SulP transporter (TC 2.A.53) family. Interacts with IQGAP1. This interaction enhances the chloride-bicarbonate exchange activity of SLC26A4. In terms of tissue distribution, highly expressed in the kidney (at protein level). Throughout the endolymphatic duct and sac, in distinct areas of the utricle and saccule, and in the external sulcus region within the cochlea. Expressed in the parotid gland.

It localises to the apical cell membrane. The protein localises to the cell membrane. It catalyses the reaction chloride(in) = chloride(out). The catalysed reaction is iodide(out) = iodide(in). It carries out the reaction hydrogencarbonate(in) + chloride(out) = hydrogencarbonate(out) + chloride(in). The enzyme catalyses iodide(in) + hydrogencarbonate(out) = iodide(out) + hydrogencarbonate(in). It catalyses the reaction iodide(in) + chloride(out) = iodide(out) + chloride(in). The catalysed reaction is formate(in) + chloride(out) = formate(out) + chloride(in). Its function is as follows. Sodium-independent transporter of chloride and iodide. Mediates electroneutral iodide-chloride, iodide-bicarbonate and chloride-bicarbonate exchange with 1:1 stoichiometry. Mediates elctroneutral chloride-formate exchange. In Mus musculus (Mouse), this protein is Pendrin (Slc26a4).